The chain runs to 300 residues: Mitochondrial GTP/GDP carrier protein 1 (300 aa).

Solcar repeat units lie at residues Gln8–Phe108, Gly117–Tyr198, and Ala208–Arg293. 6 helical membrane passes run Leu14–Ile34, Gln85–Asn101, Ser122–Leu142, Gly173–Phe189, Phe214–Ile234, and Gly268–Ala285.

This sequence belongs to the mitochondrial carrier (TC 2.A.29) family.

Its subcellular location is the mitochondrion inner membrane. Functionally, mitochondrial GTP/GDP transporter required for GTP uptake and GDP exit from mitochondria. Involved in mitochondrial iron transport and essential for mitochondrial genome maintenance. In Saccharomyces cerevisiae (strain ATCC 204508 / S288c) (Baker's yeast), this protein is Mitochondrial GTP/GDP carrier protein 1 (GGC1).